The chain runs to 511 residues: Bifunctional purine biosynthesis protein PurH (511 aa).

Residues 1–145 form the MGS-like domain; sequence MKKRALVSVS…KNHKFVSVIV (145 aa).

It belongs to the PurH family.

The catalysed reaction is (6R)-10-formyltetrahydrofolate + 5-amino-1-(5-phospho-beta-D-ribosyl)imidazole-4-carboxamide = 5-formamido-1-(5-phospho-D-ribosyl)imidazole-4-carboxamide + (6S)-5,6,7,8-tetrahydrofolate. It catalyses the reaction IMP + H2O = 5-formamido-1-(5-phospho-D-ribosyl)imidazole-4-carboxamide. Its pathway is purine metabolism; IMP biosynthesis via de novo pathway; 5-formamido-1-(5-phospho-D-ribosyl)imidazole-4-carboxamide from 5-amino-1-(5-phospho-D-ribosyl)imidazole-4-carboxamide (10-formyl THF route): step 1/1. It participates in purine metabolism; IMP biosynthesis via de novo pathway; IMP from 5-formamido-1-(5-phospho-D-ribosyl)imidazole-4-carboxamide: step 1/1. This Bacillus mycoides (strain KBAB4) (Bacillus weihenstephanensis) protein is Bifunctional purine biosynthesis protein PurH.